We begin with the raw amino-acid sequence, 96 residues long: Small ribosomal subunit protein bS18 (96 aa).

This sequence belongs to the bacterial ribosomal protein bS18 family. In terms of assembly, part of the 30S ribosomal subunit. Forms a tight heterodimer with protein bS6.

Binds as a heterodimer with protein bS6 to the central domain of the 16S rRNA, where it helps stabilize the platform of the 30S subunit. The chain is Small ribosomal subunit protein bS18 from Gluconobacter oxydans (strain 621H) (Gluconobacter suboxydans).